The following is a 118-amino-acid chain: MATRRIISQEKTLLEKDDRIGSSPAASEKSNITPAVPASVIIKLLAFTFAMIVIPISSYFLTVDRLFKGNSTYAGATAAIMANVVLIGYIIVAMAEDQSDQENEKKGGGGKGEGKKDL.

Over 1-35 (MATRRIISQEKTLLEKDDRIGSSPAASEKSNITPA) the chain is Cytoplasmic. A helical transmembrane segment spans residues 36–56 (VPASVIIKLLAFTFAMIVIPI). Residues 57-73 (SSYFLTVDRLFKGNSTY) lie on the Lumenal side of the membrane. The helical transmembrane segment at 74-94 (AGATAAIMANVVLIGYIIVAM) threads the bilayer. Residues 95-118 (AEDQSDQENEKKGGGGKGEGKKDL) are Cytoplasmic-facing. Positions 98-118 (QSDQENEKKGGGGKGEGKKDL) are disordered. Basic and acidic residues predominate over residues 102 to 118 (ENEKKGGGGKGEGKKDL). Positions 115-118 (KKDL) match the Prevents secretion from ER motif.

This sequence belongs to the VMA21 family.

It is found in the endoplasmic reticulum membrane. The protein resides in the endoplasmic reticulum-Golgi intermediate compartment membrane. The protein localises to the cytoplasmic vesicle. Its subcellular location is the COPII-coated vesicle membrane. Its function is as follows. Required for the assembly of the V0 complex of the vacuolar ATPase (V-ATPase) in the endoplasmic reticulum. This chain is Vacuolar ATPase assembly integral membrane protein vma-21 (vma-21), found in Neurospora crassa (strain ATCC 24698 / 74-OR23-1A / CBS 708.71 / DSM 1257 / FGSC 987).